The following is a 227-amino-acid chain: Ribonuclease 3 (227 aa).

The RNase III domain occupies 4–133 (FEKLEKLLSY…LIAAIYLDSN (130 aa)). Glutamate 46 lines the Mg(2+) pocket. Residue aspartate 50 is part of the active site. Mg(2+) contacts are provided by asparagine 119 and glutamate 122. The active site involves glutamate 122. The DRBM domain maps to 158–226 (DPKTALQEWA…ARSLLHRLKN (69 aa)).

Belongs to the ribonuclease III family. As to quaternary structure, homodimer. Requires Mg(2+) as cofactor.

The protein localises to the cytoplasm. The enzyme catalyses Endonucleolytic cleavage to 5'-phosphomonoester.. Digests double-stranded RNA. Involved in the processing of primary rRNA transcript to yield the immediate precursors to the large and small rRNAs (23S and 16S). Processes some mRNAs, and tRNAs when they are encoded in the rRNA operon. Processes pre-crRNA and tracrRNA of type II CRISPR loci if present in the organism. The sequence is that of Ribonuclease 3 from Rickettsia conorii (strain ATCC VR-613 / Malish 7).